We begin with the raw amino-acid sequence, 237 residues long: Pheromone-regulated membrane protein 8 (237 aa).

The Cytoplasmic segment spans residues 1–47 (MQTPSENTNAKSDSLDEPGAYLIEENVALPKDIFHSYLSYWIYEAAH). A helical membrane pass occupies residues 48-68 (CTPVMLLSLVIGVLISIIILF). At 69 to 74 (HDNENC) the chain is on the extracellular side. A helical membrane pass occupies residues 75-95 (VGVSVGFLLIFSGILVIVLIL). The Cytoplasmic portion of the chain corresponds to 96–237 (RFGPQISDED…QEYPGVDEFF (142 aa)). A disordered region spans residues 174-201 (SSASNVKDAQSNDETAGTPNEAAESSSF). The COPII binding stretch occupies residues 236-237 (FF).

This sequence belongs to the DUP/COS family. In terms of assembly, interacts with PRM9. Binds to SEC23/24 of COPII coated vesicles.

The protein localises to the membrane. It is found in the endoplasmic reticulum. May be involved in endoplasmic reticulum exit trafficking of proteins. In Saccharomyces cerevisiae (strain ATCC 204508 / S288c) (Baker's yeast), this protein is Pheromone-regulated membrane protein 8 (PRM8).